Consider the following 524-residue polypeptide: Protein tweety homolog 3 (524 aa).

The Extracellular portion of the chain corresponds to 1 to 42 (MAGVSYAAPWWVSLLHRLPHFDLRWEATSSQFRPEDADYQQA). The helical transmembrane segment at 43-63 (LLLLGATALACLALDLLFLLF) threads the bilayer. Over 64-86 (YSFWLCCRRRKTDEHLDADCCCT) the chain is Cytoplasmic. Residues 87–107 (AWCVIITTLVCSAGIAVGFYG) traverse the membrane as a helical segment. The Extracellular segment spans residues 108–211 (NGETSDGIHR…VDLYDWYRWL (104 aa)). Residues Glu-110 and Asp-113 each coordinate Ca(2+). 2 N-linked (GlcNAc...) asparagine glycosylation sites follow: Asn-126 and Asn-144. Residues 212–232 (GYLGLLLLDVIICLLVLVGLI) traverse the membrane as a helical segment. Topologically, residues 233-236 (RSSK) are cytoplasmic. The helical transmembrane segment at 237–257 (GILVGVCLLGVLALVISWGAL) threads the bilayer. The Extracellular segment spans residues 258-386 (GLELAVSVGS…LTGFCYDGVE (129 aa)). 2 disulfides stabilise this stretch: Cys-271/Cys-381 and Cys-299/Cys-366. Asn-351 is a glycosylation site (N-linked (GlcNAc...) asparagine). The helical transmembrane segment at 387–407 (GLIYLALFSFVTALMFSSIVC) threads the bilayer. Over 408–524 (SIPHTWQQKR…PRPDSSGSGH (117 aa)) the chain is Cytoplasmic. Disordered stretches follow at residues 413–435 (WQQK…RQAH) and 485–524 (RCEN…GSGH). Residue Ser-496 is modified to Phosphoserine. Positions 498 to 501 (PPSY) match the PY-motif; mediates interaction with NEDD4L motif. Polar residues predominate over residues 501–524 (YTSSMRAKYLATSQPRPDSSGSGH). Phosphoserine occurs at positions 504 and 522.

The protein belongs to the tweety family. Homotetramer; disulfide-linked. Forms cis-homodimers in the presence of Ca(2+). Interacts with NEDD4L. Ubiquitinated by NEDD4L. In terms of processing, N-glycosylated. In terms of tissue distribution, expressed in excitable tissues. Expressed in the brain, heart, skeletal muscle, colon, spleen, kidney and peripheral blood leukocytes. Also expressed in fat, the pancreas, thymus, and uterus.

The protein resides in the cell membrane. The catalysed reaction is chloride(in) = chloride(out). The enzyme catalyses L-glutamate(out) = L-glutamate(in). Its activity is regulated as follows. Inhibited by (4-[(2-butyl-6,7-dichloro-2- cyclopentyl-2,3-dihydro-1-oxo-1H-inden-5-yl)oxy]butanoic acid), genistein and PD98059 (MEK1 inhibitor). In terms of biological role, calcium-independent, swelling-dependent volume-regulated anion channel (VRAC-swell) which plays a pivotal role in the process of regulatory volume decrease (RVD) in the brain through the efflux of anions like chloride and organic osmolytes like glutamate. Probable large-conductance Ca(2+)-activated chloride channel. This chain is Protein tweety homolog 3 (Ttyh3), found in Mus musculus (Mouse).